A 747-amino-acid polypeptide reads, in one-letter code: Histone-lysine N-methyltransferase EZH1 (747 aa).

The interval 188-231 (DEEEEGHNDTSDGKQDDSKEDLPVTRKRKRHAIEGNKKSSKKQF) is disordered. Over residues 194-211 (HNDTSDGKQDDSKEDLPV) the composition is skewed to basic and acidic residues. K327 is covalently cross-linked (Glycyl lysine isopeptide (Lys-Gly) (interchain with G-Cter in SUMO2)). Residues 378–421 (SAVAETKEGDSDRDTGNDWASSSSEANSRCQTPTKQKASPAPPQ) are disordered. Over residues 382–393 (ETKEGDSDRDTG) the composition is skewed to basic and acidic residues. A compositionally biased stretch (polar residues) spans 395 to 414 (DWASSSSEANSRCQTPTKQK). The Nuclear localization signal signature appears at 491–496 (QKKKRK). Residues 504–606 (CRKIQLKKDN…CKVVSCKNCS (103 aa)) form the CXC domain. An SET domain is found at 613 to 728 (KHLLLAPSDV…AGEELFLDYR (116 aa)).

The protein belongs to the class V-like SAM-binding methyltransferase superfamily. Histone-lysine methyltransferase family. EZ subfamily. Component of the PRC2/EED-EZH1 complex, which includes EED, EZH1, SUZ12, RBBP4 and AEBP2. The PRC2/EED-EZH1 is less abundant than the PRC2/EED-EZH2 complex, has weak methyltransferase activity and compacts chromatin in the absence of the methyltransferase cofactor S-adenosyl-L-methionine (SAM). Interacts with EZHIP; the interaction blocks EZH1 methyltransferase activity.

It localises to the nucleus. It carries out the reaction L-lysyl(27)-[histone H3] + 3 S-adenosyl-L-methionine = N(6),N(6),N(6)-trimethyl-L-lysyl(27)-[histone H3] + 3 S-adenosyl-L-homocysteine + 3 H(+). In terms of biological role, polycomb group (PcG) protein. Catalytic subunit of the PRC2/EED-EZH1 complex, which methylates 'Lys-27' of histone H3, leading to transcriptional repression of the affected target gene. Able to mono-, di- and trimethylate 'Lys-27' of histone H3 to form H3K27me1, H3K27me2 and H3K27me3, respectively. Required for embryonic stem cell derivation and self-renewal, suggesting that it is involved in safeguarding embryonic stem cell identity. Compared to EZH2-containing complexes, it is less abundant in embryonic stem cells, has weak methyltransferase activity and plays a less critical role in forming H3K27me3, which is required for embryonic stem cell identity and proper differentiation. The sequence is that of Histone-lysine N-methyltransferase EZH1 (EZH1) from Pongo abelii (Sumatran orangutan).